Reading from the N-terminus, the 365-residue chain is Gibberellin 20 oxidase 1-A (365 aa).

In terms of domain architecture, Fe2OG dioxygenase spans 199–299 (GNDSIMRLNY…RKSLAFFLCP (101 aa)). The Fe cation site is built by His-224, Asp-226, and His-280. Arg-290 is a catalytic residue.

It belongs to the iron/ascorbate-dependent oxidoreductase family. GA20OX subfamily. Requires Fe cation as cofactor. L-ascorbate serves as cofactor. As to expression, expressed in nodes and the ear of the elongating stem.

The enzyme catalyses gibberellin A12 + 2 2-oxoglutarate + 3 O2 + H(+) = gibberellin A9 + 2 succinate + 3 CO2 + 2 H2O. It catalyses the reaction gibberellin A53 + 2 2-oxoglutarate + 3 O2 + H(+) = gibberellin A20 + 2 succinate + 3 CO2 + 2 H2O. Key oxidase enzyme in the biosynthesis of gibberellin that catalyzes the conversion of GA12 and GA53 to GA9 and GA20 respectively, via a three-step oxidation at C-20 of the GA skeleton. In Triticum aestivum (Wheat), this protein is Gibberellin 20 oxidase 1-A (GA20ox1A).